We begin with the raw amino-acid sequence, 209 residues long: Cytidylate kinase (209 aa).

9 to 17 (GPAAAGKGT) is an ATP binding site.

The protein belongs to the cytidylate kinase family. Type 1 subfamily.

It is found in the cytoplasm. It catalyses the reaction CMP + ATP = CDP + ADP. It carries out the reaction dCMP + ATP = dCDP + ADP. The protein is Cytidylate kinase of Granulibacter bethesdensis (strain ATCC BAA-1260 / CGDNIH1).